A 375-amino-acid polypeptide reads, in one-letter code: Succinyl-diaminopimelate desuccinylase (375 aa).

His66 serves as a coordination point for Zn(2+). The active site involves Asp68. Asp99 contributes to the Zn(2+) binding site. The active-site Proton acceptor is Glu133. Positions 134, 162, and 348 each coordinate Zn(2+).

Belongs to the peptidase M20A family. DapE subfamily. As to quaternary structure, homodimer. It depends on Zn(2+) as a cofactor. The cofactor is Co(2+).

The enzyme catalyses N-succinyl-(2S,6S)-2,6-diaminopimelate + H2O = (2S,6S)-2,6-diaminopimelate + succinate. It functions in the pathway amino-acid biosynthesis; L-lysine biosynthesis via DAP pathway; LL-2,6-diaminopimelate from (S)-tetrahydrodipicolinate (succinylase route): step 3/3. In terms of biological role, catalyzes the hydrolysis of N-succinyl-L,L-diaminopimelic acid (SDAP), forming succinate and LL-2,6-diaminopimelate (DAP), an intermediate involved in the bacterial biosynthesis of lysine and meso-diaminopimelic acid, an essential component of bacterial cell walls. The polypeptide is Succinyl-diaminopimelate desuccinylase (Yersinia enterocolitica serotype O:8 / biotype 1B (strain NCTC 13174 / 8081)).